The chain runs to 278 residues: MNNILSEEVLNVTDFTTSRQLTLWKREDLQSSQLDDVAEEVPVALVYNGISHVVMMASPKDLTHFAMGFSLSEGIIDSPREIYGMDVVPSCNGLEVQIDLSSRRFMGLKARRRALAGRTGCGVCGVEQLNDIGKPVQPLPFSQTFNLGNLDRALKHLNDFQPTGKLTGCTHAAAWVMPSGELAGGHEDVGRHVALDKLLGRRATEGEEWRQGAALVSSRASYEMVQKSAMCGVEILFAVSAATTLAVEVAERCNLTLVGFCKPGRATIYTHPQRLIAD.

Cys-121 functions as the Cysteine persulfide intermediate in the catalytic mechanism. Residue 260–265 (FCKPGR) participates in Mo-bis(molybdopterin guanine dinucleotide) binding.

The protein belongs to the FdhD family.

It is found in the cytoplasm. Functionally, required for formate dehydrogenase (FDH) activity. Acts as a sulfur carrier protein that transfers sulfur from IscS to the molybdenum cofactor prior to its insertion into FDH. This Salmonella heidelberg (strain SL476) protein is Sulfur carrier protein FdhD.